A 437-amino-acid chain; its full sequence is MKKMKIFGFLISFSLFFLSPFVCQANYDSNFTRPPPRPLFIVSHGRPKFYPQQVHISLAGKDHMRVTYTTDDLNVASMVEYGKHPKKYDKKTAGESTSYTYFFYNSGKIHHVKIGPLKPNTKYYYRCGGHGDEFSFKTPPSKFPIEFAVAGDLGQTDWTVRTLDQIRKRDFDVFLLPGDLSYADTHQPLWDSFGRLLETLASTRPWMVTEGNHEIESFPTNDHISFKSYNARWLMPHAESLSHSNLYYSFDVAGVHTVMLGSYTPYESHSDQYHWLQADLRKVDRKKTPWLVVVMHTPWYSTNKAHYGEGEKMRSALESLLYRAQVDVVFAGHVHTYERFKPIYNKKADPCGPMYITIGDGGNREGLALRFKKPQSPLSEFRESSFGHGRLRIIDHKRAHWSWHRNNDEMSSIADEVSFESPRTSSHCHSNRYRGEI.

Residues 1 to 25 (MKKMKIFGFLISFSLFFLSPFVCQA) form the signal peptide. The N-linked (GlcNAc...) asparagine glycan is linked to Asn30. Residues Asp152, Asp179, and Tyr182 each contribute to the Fe cation site. Residue Asp179 coordinates Zn(2+). Zn(2+) contacts are provided by Asn212 and His296. Asn212 contacts substrate. His306 functions as the Proton donor in the catalytic mechanism. His333 contacts Zn(2+). 333 to 335 (HVH) provides a ligand contact to substrate. His335 contacts Fe cation.

Belongs to the metallophosphoesterase superfamily. Purple acid phosphatase family. As to quaternary structure, homodimer. The cofactor is Fe cation. Zn(2+) serves as cofactor. Expressed flowers and siliques.

It localises to the secreted. It catalyses the reaction a phosphate monoester + H2O = an alcohol + phosphate. The chain is Purple acid phosphatase 21 (PAP21) from Arabidopsis thaliana (Mouse-ear cress).